Reading from the N-terminus, the 355-residue chain is UDP-N-acetylglucosamine--N-acetylmuramyl-(pentapeptide) pyrophosphoryl-undecaprenol N-acetylglucosamine transferase (355 aa).

UDP-N-acetyl-alpha-D-glucosamine contacts are provided by residues 11–13 (TAG), Arg-164, Ser-194, and Gln-289.

The protein belongs to the glycosyltransferase 28 family. MurG subfamily.

The protein resides in the cell membrane. It catalyses the reaction di-trans,octa-cis-undecaprenyl diphospho-N-acetyl-alpha-D-muramoyl-L-alanyl-D-glutamyl-meso-2,6-diaminopimeloyl-D-alanyl-D-alanine + UDP-N-acetyl-alpha-D-glucosamine = di-trans,octa-cis-undecaprenyl diphospho-[N-acetyl-alpha-D-glucosaminyl-(1-&gt;4)]-N-acetyl-alpha-D-muramoyl-L-alanyl-D-glutamyl-meso-2,6-diaminopimeloyl-D-alanyl-D-alanine + UDP + H(+). It functions in the pathway cell wall biogenesis; peptidoglycan biosynthesis. Cell wall formation. Catalyzes the transfer of a GlcNAc subunit on undecaprenyl-pyrophosphoryl-MurNAc-pentapeptide (lipid intermediate I) to form undecaprenyl-pyrophosphoryl-MurNAc-(pentapeptide)GlcNAc (lipid intermediate II). The sequence is that of UDP-N-acetylglucosamine--N-acetylmuramyl-(pentapeptide) pyrophosphoryl-undecaprenol N-acetylglucosamine transferase from Lachnoclostridium phytofermentans (strain ATCC 700394 / DSM 18823 / ISDg) (Clostridium phytofermentans).